A 185-amino-acid chain; its full sequence is Ribosome-recycling factor (185 aa).

Belongs to the RRF family.

It localises to the cytoplasm. Its function is as follows. Responsible for the release of ribosomes from messenger RNA at the termination of protein biosynthesis. May increase the efficiency of translation by recycling ribosomes from one round of translation to another. The protein is Ribosome-recycling factor of Legionella pneumophila (strain Corby).